A 294-amino-acid chain; its full sequence is Undecaprenyl-diphosphatase (294 aa).

6 consecutive transmembrane segments (helical) span residues 39–59 (PGAA…ILYF), 93–113 (ATLG…GFTL), 123–143 (NLWI…VVDA), 198–218 (SFLM…VKAV), 232–252 (PTLV…IGFL), and 268–288 (IGLA…AIDP).

Belongs to the UppP family.

It localises to the cell membrane. The catalysed reaction is di-trans,octa-cis-undecaprenyl diphosphate + H2O = di-trans,octa-cis-undecaprenyl phosphate + phosphate + H(+). Functionally, catalyzes the dephosphorylation of undecaprenyl diphosphate (UPP). Confers resistance to bacitracin. This chain is Undecaprenyl-diphosphatase, found in Bifidobacterium longum subsp. infantis (strain ATCC 15697 / DSM 20088 / JCM 1222 / NCTC 11817 / S12).